The following is a 416-amino-acid chain: Glyceraldehyde-3-phosphate dehydrogenase, chloroplastic (416 aa).

The transit peptide at 1–78 directs the protein to the chloroplast; the sequence is MAFVAPVSSV…APARTSNAPS (78 aa). NADP(+) is bound by residues 90–91, Asp114, and Arg158; that span reads RI. D-glyceraldehyde 3-phosphate contacts are provided by residues 232 to 234, Thr263, Arg278, 291 to 292, and Arg314; these read SCT and TG. The active-site Nucleophile is the Cys233. Asn396 is an NADP(+) binding site.

Belongs to the glyceraldehyde-3-phosphate dehydrogenase family. In terms of assembly, homotetramer.

The protein resides in the plastid. It is found in the chloroplast. It catalyses the reaction D-glyceraldehyde 3-phosphate + phosphate + NADP(+) = (2R)-3-phospho-glyceroyl phosphate + NADPH + H(+). Its pathway is carbohydrate biosynthesis; Calvin cycle. The protein is Glyceraldehyde-3-phosphate dehydrogenase, chloroplastic (GAPA) of Gracilaria gracilis (Red alga).